The primary structure comprises 188 residues: GTPase KRas (188 aa).

GTP-binding positions include 10–18 (GAGGVGKSA), 29–35 (VDEYDPT), 59–60 (AG), and 116–119 (NKCD). Positions 32–40 (YDPTIEDSY) match the Effector region motif. Positions 167–188 (KEKMSKEGKKKKKKSKTKCILM) are disordered. The residue at position 185 (Cys185) is a Cysteine methyl ester. Cys185 is lipidated: S-farnesyl cysteine. A propeptide spans 186-188 (ILM) (removed in mature form).

This sequence belongs to the small GTPase superfamily. Ras family.

It is found in the cell membrane. Its subcellular location is the cytoplasm. It catalyses the reaction GTP + H2O = GDP + phosphate + H(+). Its activity is regulated as follows. Alternates between an inactive form bound to GDP and an active form bound to GTP. Activated by a guanine nucleotide-exchange factor (GEF) and inactivated by a GTPase-activating protein (GAP). In terms of biological role, ras proteins bind GDP/GTP and possess intrinsic GTPase activity. Plays an important role in the regulation of cell proliferation. The chain is GTPase KRas (kras1) from Oryzias latipes (Japanese rice fish).